The primary structure comprises 268 residues: Small ribosomal subunit protein uS3 (268 aa).

The KH type-2 domain maps to 39–107 (VREYLKKKLK…PVHVNIEEIR (69 aa)). The tract at residues 216–268 (VEEVAEEKRPRRNARPGGDRRPRRDGEGGGPAGARRGAPRRAGGAGGDGKTGE) is disordered. Basic and acidic residues predominate over residues 232 to 242 (GGDRRPRRDGE). A compositionally biased stretch (low complexity) spans 248–257 (GARRGAPRRA). Residues 258–268 (GGAGGDGKTGE) show a composition bias toward gly residues.

It belongs to the universal ribosomal protein uS3 family. In terms of assembly, part of the 30S ribosomal subunit. Forms a tight complex with proteins S10 and S14.

Its function is as follows. Binds the lower part of the 30S subunit head. Binds mRNA in the 70S ribosome, positioning it for translation. The protein is Small ribosomal subunit protein uS3 of Paraburkholderia phytofirmans (strain DSM 17436 / LMG 22146 / PsJN) (Burkholderia phytofirmans).